The primary structure comprises 433 residues: Serine--tRNA ligase (433 aa).

235–237 (TSE) is a binding site for L-serine. 266-268 (RSE) serves as a coordination point for ATP. E289 lines the L-serine pocket. 353–356 (EISS) serves as a coordination point for ATP. S388 contributes to the L-serine binding site.

The protein belongs to the class-II aminoacyl-tRNA synthetase family. Type-1 seryl-tRNA synthetase subfamily. In terms of assembly, homodimer. The tRNA molecule binds across the dimer.

The protein localises to the cytoplasm. It carries out the reaction tRNA(Ser) + L-serine + ATP = L-seryl-tRNA(Ser) + AMP + diphosphate + H(+). It catalyses the reaction tRNA(Sec) + L-serine + ATP = L-seryl-tRNA(Sec) + AMP + diphosphate + H(+). Its pathway is aminoacyl-tRNA biosynthesis; selenocysteinyl-tRNA(Sec) biosynthesis; L-seryl-tRNA(Sec) from L-serine and tRNA(Sec): step 1/1. Functionally, catalyzes the attachment of serine to tRNA(Ser). Is also able to aminoacylate tRNA(Sec) with serine, to form the misacylated tRNA L-seryl-tRNA(Sec), which will be further converted into selenocysteinyl-tRNA(Sec). The chain is Serine--tRNA ligase from Burkholderia pseudomallei (strain 1106a).